We begin with the raw amino-acid sequence, 244 residues long: Probable transcriptional regulatory protein CHAB381_1426 (244 aa).

It belongs to the TACO1 family.

The protein resides in the cytoplasm. This is Probable transcriptional regulatory protein CHAB381_1426 from Campylobacter hominis (strain ATCC BAA-381 / DSM 21671 / CCUG 45161 / LMG 19568 / NCTC 13146 / CH001A).